The sequence spans 545 residues: Chaperonin GroEL (545 aa).

ATP contacts are provided by residues 29–32, Lys50, 86–90, Gly413, 479–481, and Asp496; these read TLGP, DGTTT, and NAA. The segment at 525 to 545 is disordered; sequence KPEKEKAPAAAGAPDMGGMDF. The span at 532–545 shows a compositional bias: low complexity; it reads PAAAGAPDMGGMDF.

The protein belongs to the chaperonin (HSP60) family. In terms of assembly, forms a cylinder of 14 subunits composed of two heptameric rings stacked back-to-back. Interacts with the co-chaperonin GroES.

The protein resides in the cytoplasm. The catalysed reaction is ATP + H2O + a folded polypeptide = ADP + phosphate + an unfolded polypeptide.. Together with its co-chaperonin GroES, plays an essential role in assisting protein folding. The GroEL-GroES system forms a nano-cage that allows encapsulation of the non-native substrate proteins and provides a physical environment optimized to promote and accelerate protein folding. The protein is Chaperonin GroEL of Deinococcus geothermalis (strain DSM 11300 / CIP 105573 / AG-3a).